The following is a 418-amino-acid chain: Actin-related protein 3 (418 aa).

It belongs to the actin family. ARP3 subfamily. Component of the Arp2/3 complex.

It localises to the cytoplasm. The protein resides in the cytoskeleton. Functionally, functions as ATP-binding component of the Arp2/3 complex which is involved in regulation of actin polymerization and together with an activating nucleation-promoting factor (NPF) mediates the formation of branched actin networks. Seems to contact the pointed end of the daughter actin filament. Required during embryogenesis for the developmental migration of tail hemocytes anteriorly, along the ventral midline. This is Actin-related protein 3 from Drosophila melanogaster (Fruit fly).